The following is a 319-amino-acid chain: Beta-ketoacyl-[acyl-carrier-protein] synthase III (319 aa).

Active-site residues include Cys115 and His246. An ACP-binding region spans residues Gln247–Arg251. Asn276 is a catalytic residue.

The protein belongs to the thiolase-like superfamily. FabH family. As to quaternary structure, homodimer.

The protein localises to the cytoplasm. The enzyme catalyses malonyl-[ACP] + acetyl-CoA + H(+) = 3-oxobutanoyl-[ACP] + CO2 + CoA. It functions in the pathway lipid metabolism; fatty acid biosynthesis. Its function is as follows. Catalyzes the condensation reaction of fatty acid synthesis by the addition to an acyl acceptor of two carbons from malonyl-ACP. Catalyzes the first condensation reaction which initiates fatty acid synthesis and may therefore play a role in governing the total rate of fatty acid production. Possesses both acetoacetyl-ACP synthase and acetyl transacylase activities. Its substrate specificity determines the biosynthesis of branched-chain and/or straight-chain of fatty acids. In Coxiella burnetii (strain RSA 493 / Nine Mile phase I), this protein is Beta-ketoacyl-[acyl-carrier-protein] synthase III.